The following is a 391-amino-acid chain: Phosphoprotein (391 aa).

2 positions are modified to phosphothreonine: threonine 10 and threonine 16. Polar residues predominate over residues 54-65 (QKNIQHPTASHQ). 2 disordered regions span residues 54–98 (QKNI…EPLF) and 148–184 (PVTE…KERS). Serine 69 is subject to Phosphoserine. Residues threonine 91, threonine 150, and threonine 165 each carry the phosphothreonine modification. Serine 188 bears the Phosphoserine mark. The tract at residues 216 to 279 (ISANEIMDLL…MATVKIMDPG (64 aa)) is multimerization. Positions 218-245 (ANEIMDLLRGMDARLQHLEQKVDKVLAQ) form a coiled coil. Threonine 250 is modified (phosphothreonine). Residue serine 257 is modified to Phosphoserine. Residues threonine 258 and threonine 282 each carry the phosphothreonine modification. Residues serine 292 and serine 294 each carry the phosphoserine modification. Threonine 298 is modified (phosphothreonine). 2 positions are modified to phosphoserine: serine 301 and serine 374. Positions 343 to 391 (AGRKVMITKMITDCVANPQMKQAFEQRLAKASTEDALNDIKRDIIRSAI) are interaction with the nucleoprotein. Phosphothreonine is present on threonine 375.

Belongs to the rubulavirus/avulavirus P protein family. Homotetramer. Interacts (via multimerization domain) with polymerase L; this interaction forms the polymerase L-P complex. Interacts (via N-terminus) with N0 (via Ncore); this interaction allows P to chaperon N0 to avoid N polymerization before encapsidation. Interacts (via C-terminus) with N-RNA template; this interaction positions the polymerase on the template for both transcription and replication. Interacts with host RPS6KB1 kinase; this interaction may play a role in the viral replication and transcription.

In terms of biological role, essential cofactor of the RNA polymerase L that plays a central role in the transcription and replication by forming the polymerase complex with RNA polymerase L and recruiting L to the genomic N-RNA template for RNA synthesis. Also plays a central role in the encapsidation of nascent RNA chains by forming the encapsidation complex with the nucleocapsid protein N (N-P complex). Acts as a chaperone for newly synthesized free N protein, so-called N0, allowing encapsidation of nascent RNA chains during replication. The nucleoprotein protein N prevents excessive phosphorylation of P, which leads to down-regulation of viral transcription/ replication. Participates, together with N, in the formation of viral factories (viroplasms), which are large inclusions in the host cytoplasm where replication takes place. The polypeptide is Phosphoprotein (Mumps virus (strain Enders) (MuV)).